The primary structure comprises 289 residues: uncharacterized protein (289 aa).

The span at 80–96 shows a compositional bias: polar residues; it reads PLNESRTSFKNIPQSRN. 2 disordered regions span residues 80–101 and 136–157; these read PLNESRTSFKNIPQSRNLPRDY and PRENFRNDTDIPKDPLRDRMRE.

This is an uncharacterized protein from Acanthamoeba polyphaga (Amoeba).